We begin with the raw amino-acid sequence, 229 residues long: 2-C-methyl-D-erythritol 4-phosphate cytidylyltransferase (229 aa).

It belongs to the IspD/TarI cytidylyltransferase family. IspD subfamily.

It catalyses the reaction 2-C-methyl-D-erythritol 4-phosphate + CTP + H(+) = 4-CDP-2-C-methyl-D-erythritol + diphosphate. Its pathway is isoprenoid biosynthesis; isopentenyl diphosphate biosynthesis via DXP pathway; isopentenyl diphosphate from 1-deoxy-D-xylulose 5-phosphate: step 2/6. Its function is as follows. Catalyzes the formation of 4-diphosphocytidyl-2-C-methyl-D-erythritol from CTP and 2-C-methyl-D-erythritol 4-phosphate (MEP). This chain is 2-C-methyl-D-erythritol 4-phosphate cytidylyltransferase, found in Clostridium botulinum (strain Loch Maree / Type A3).